The primary structure comprises 347 residues: ATP-dependent kinase YFH7 (347 aa).

33–41 (GPPGSGKST) contacts ATP.

Belongs to the YFH7 family.

In terms of biological role, ATP-dependent kinase that could be involved in endoplasmic reticulum membrane assembly. The protein is ATP-dependent kinase YFH7 (YFH7) of Lachancea thermotolerans (strain ATCC 56472 / CBS 6340 / NRRL Y-8284) (Yeast).